The chain runs to 416 residues: Creatine kinase U-type, mitochondrial (416 aa).

The transit peptide at 1 to 39 directs the protein to the mitochondrion; that stretch reads MAGPFSRLLSARPGLRLLALAGAGSLAAGFLLRSEPVRA. The cardiolipin-binding stretch occupies residues 40 to 64; it reads ASERRRLYPPSAEYPDLRKHNNCMA. The 87-residue stretch at 45-131 folds into the Phosphagen kinase N-terminal domain; that stretch reads RLYPPSAEYP…FDPVIQERHN (87 aa). The residue at position 151 (Ser-151) is a Phosphoserine. The region spanning 158 to 400 is the Phosphagen kinase C-terminal domain; the sequence is YVLSSRVRTG…NFLIDCERRL (243 aa). Position 161-165 (161-165) interacts with ATP; the sequence is SSRVR. Position 196 is a phosphoserine (Ser-196). Residue Thr-213 is modified to Phosphothreonine. His-224 lines the ATP pocket. A Phosphoserine modification is found at Ser-232. Residues Arg-269, Arg-325, and 353 to 358 each bind ATP; that span reads RGTGGV. Thr-355 is subject to Phosphothreonine. Ser-365 bears the Phosphoserine mark. An ATP-binding site is contributed by Asp-368.

The protein belongs to the ATP:guanido phosphotransferase family. Exists as an octamer composed of four MTCK homodimers.

The protein localises to the mitochondrion inner membrane. The enzyme catalyses creatine + ATP = N-phosphocreatine + ADP + H(+). Reversibly catalyzes the transfer of phosphate between ATP and various phosphogens (e.g. creatine phosphate). Creatine kinase isoenzymes play a central role in energy transduction in tissues with large, fluctuating energy demands, such as skeletal muscle, heart, brain and spermatozoa. This Bos taurus (Bovine) protein is Creatine kinase U-type, mitochondrial (CKMT1).